The following is a 187-amino-acid chain: Putative manganese efflux pump MntP (187 aa).

6 helical membrane-spanning segments follow: residues 3-23 (YYTLWVIAFGLSMDAFAVSVG), 39-59 (IALCFGLFQACMPLLGYYVGS), 65-85 (ISEFDHWIAFALLCVIGINMI), 106-126 (LTMLGVATSIDALAMGVSFAF), 129-149 (VNIWTAAAIIGITTTILSLFG), and 166-186 (LLGGIILIAMGVKVLIEHRVF).

Belongs to the MntP (TC 9.B.29) family.

The protein localises to the cell inner membrane. Probably functions as a manganese efflux pump. The protein is Putative manganese efflux pump MntP of Actinobacillus succinogenes (strain ATCC 55618 / DSM 22257 / CCUG 43843 / 130Z).